Consider the following 410-residue polypeptide: DNA primase small subunit (410 aa).

Residues glutamate 43, aspartate 106, and aspartate 108 contribute to the active site. The short motif at 118–129 (CCKDATVCPKCW) is the Zinc knuckle motif element.

This sequence belongs to the eukaryotic-type primase small subunit family. As to quaternary structure, heterodimer of a small subunit and a large subunit.

In terms of biological role, DNA primase is the polymerase that synthesizes small RNA primers for the Okazaki fragments made during discontinuous DNA replication. The chain is DNA primase small subunit (pri-1) from Caenorhabditis elegans.